A 233-amino-acid polypeptide reads, in one-letter code: Leucyl/phenylalanyl-tRNA--protein transferase (233 aa).

Belongs to the L/F-transferase family.

The protein resides in the cytoplasm. The catalysed reaction is N-terminal L-lysyl-[protein] + L-leucyl-tRNA(Leu) = N-terminal L-leucyl-L-lysyl-[protein] + tRNA(Leu) + H(+). It catalyses the reaction N-terminal L-arginyl-[protein] + L-leucyl-tRNA(Leu) = N-terminal L-leucyl-L-arginyl-[protein] + tRNA(Leu) + H(+). The enzyme catalyses L-phenylalanyl-tRNA(Phe) + an N-terminal L-alpha-aminoacyl-[protein] = an N-terminal L-phenylalanyl-L-alpha-aminoacyl-[protein] + tRNA(Phe). Functions in the N-end rule pathway of protein degradation where it conjugates Leu, Phe and, less efficiently, Met from aminoacyl-tRNAs to the N-termini of proteins containing an N-terminal arginine or lysine. In Anaeromyxobacter dehalogenans (strain 2CP-C), this protein is Leucyl/phenylalanyl-tRNA--protein transferase.